The chain runs to 252 residues: Cell division protein ZapD (252 aa).

Belongs to the ZapD family. Interacts with FtsZ.

It is found in the cytoplasm. In terms of biological role, cell division factor that enhances FtsZ-ring assembly. Directly interacts with FtsZ and promotes bundling of FtsZ protofilaments, with a reduction in FtsZ GTPase activity. In Ralstonia nicotianae (strain ATCC BAA-1114 / GMI1000) (Ralstonia solanacearum), this protein is Cell division protein ZapD.